We begin with the raw amino-acid sequence, 55 residues long: Conotoxin vc5b (55 aa).

A signal peptide spans 1–15 (VILLLLIASAPSVDA). Positions 16 to 41 (QPKTKDDVPLAPLHDNAKSALQHLNQ) are excised as a propeptide. At glutamine 53 the chain carries Glutamine amide.

In terms of processing, contains 2 disulfide bonds that can be either 'C1-C3, C2-C4' or 'C1-C4, C2-C3', since these disulfide connectivities have been observed for conotoxins with cysteine framework V (for examples, see AC P0DQQ7 and AC P81755). In terms of tissue distribution, expressed by the venom duct.

The protein resides in the secreted. This chain is Conotoxin vc5b, found in Conus victoriae (Queen Victoria cone).